A 262-amino-acid chain; its full sequence is MAAPSGTVSDSESSNSSSDAEELERCREAAMPAWGLEQRPHVAGKPRAGAANSQLSTSQPSLRHKVNEHEQDGNELQTTPEFRAHVAKKLGALLDSFITISEAAKEPAKAKVQKVALEDDGFRLFFTSVPGGREKEESPQPRRKRQPSSSSEDSDEEWRRCREAAVSASDILQESAIHSPGTVEKEAKKKRKLKKKAKKVASVDSAVAATTPTSMATVQKQKSGELNGDQVSLGTKKKKKAKKASETSPFPPAKSATAIPAN.

Disordered regions lie at residues 1-79 (MAAP…LQTT) and 126-262 (FTSV…IPAN). The segment covering 9 to 18 (SDSESSNSSS) has biased composition (low complexity). Over residues 51 to 61 (ANSQLSTSQPS) the composition is skewed to polar residues. Phosphoserine is present on Ser-61. Residue Thr-79 is modified to Phosphothreonine. Ser-138 carries the post-translational modification Phosphoserine. Position 182 is a phosphothreonine (Thr-182). Residues 188-199 (KKKRKLKKKAKK) show a composition bias toward basic residues. A compositionally biased stretch (low complexity) spans 200–209 (VASVDSAVAA). Polar residues predominate over residues 210–221 (TTPTSMATVQKQ). At Thr-211 the chain carries Phosphothreonine. The Nucleolar localization signal (NLS) motif lies at 236–241 (KKKKKA).

It belongs to the CUSTOS family.

The protein resides in the nucleus envelope. Plays a role in the regulation of Wnt signaling pathway during early development. The chain is Protein CUSTOS from Homo sapiens (Human).